Consider the following 535-residue polypeptide: CTP synthase (535 aa).

The tract at residues 1–267 (MTKYIFVTGG…DQIVCDHLKL (267 aa)) is amidoligase domain. Position 13 (Ser13) interacts with CTP. A UTP-binding site is contributed by Ser13. 14-19 (SLGKGI) is a binding site for ATP. An L-glutamine-binding site is contributed by Tyr54. Asp71 serves as a coordination point for ATP. Mg(2+) is bound by residues Asp71 and Glu141. CTP is bound by residues 148–150 (DIE), 188–193 (KTKPTQ), and Lys224. Residues 188 to 193 (KTKPTQ) and Lys224 contribute to the UTP site. 240-242 (RDA) provides a ligand contact to ATP. The Glutamine amidotransferase type-1 domain occupies 292-534 (KIALVGKYVE…VKASLTNKES (243 aa)). Gly354 serves as a coordination point for L-glutamine. Cys381 (nucleophile; for glutamine hydrolysis) is an active-site residue. Residues 382–385 (LGMQ), Glu405, and Arg462 each bind L-glutamine. Catalysis depends on residues His507 and Glu509.

Belongs to the CTP synthase family. In terms of assembly, homotetramer.

The catalysed reaction is UTP + L-glutamine + ATP + H2O = CTP + L-glutamate + ADP + phosphate + 2 H(+). It catalyses the reaction L-glutamine + H2O = L-glutamate + NH4(+). The enzyme catalyses UTP + NH4(+) + ATP = CTP + ADP + phosphate + 2 H(+). The protein operates within pyrimidine metabolism; CTP biosynthesis via de novo pathway; CTP from UDP: step 2/2. With respect to regulation, allosterically activated by GTP, when glutamine is the substrate; GTP has no effect on the reaction when ammonia is the substrate. The allosteric effector GTP functions by stabilizing the protein conformation that binds the tetrahedral intermediate(s) formed during glutamine hydrolysis. Inhibited by the product CTP, via allosteric rather than competitive inhibition. Catalyzes the ATP-dependent amination of UTP to CTP with either L-glutamine or ammonia as the source of nitrogen. Regulates intracellular CTP levels through interactions with the four ribonucleotide triphosphates. This chain is CTP synthase, found in Bacillus anthracis (strain A0248).